A 333-amino-acid chain; its full sequence is Probable tRNA pseudouridine synthase B (333 aa).

Asp-66 acts as the Nucleophile in catalysis. Residues 233–308 form the PUA domain; that stretch reads LKKIIVKDSA…EVVEITRVIM (76 aa).

It belongs to the pseudouridine synthase TruB family. Type 2 subfamily.

The catalysed reaction is uridine(55) in tRNA = pseudouridine(55) in tRNA. Could be responsible for synthesis of pseudouridine from uracil-55 in the psi GC loop of transfer RNAs. The sequence is that of Probable tRNA pseudouridine synthase B from Methanococcus maripaludis (strain C6 / ATCC BAA-1332).